A 226-amino-acid polypeptide reads, in one-letter code: UPF0758 protein Spy49_0870 (226 aa).

In terms of domain architecture, MPN spans 103–225; the sequence is SVLTSVQVAE…YYSFREKSTL (123 aa). Residues His174, His176, and Asp187 each coordinate Zn(2+). Positions 174–187 match the JAMM motif motif; it reads HNHPSGNIEPSSND.

The protein belongs to the UPF0758 family.

This chain is UPF0758 protein Spy49_0870, found in Streptococcus pyogenes serotype M49 (strain NZ131).